A 158-amino-acid chain; its full sequence is NADH-quinone oxidoreductase subunit B (158 aa).

[4Fe-4S] cluster contacts are provided by Cys37, Cys38, Cys102, and Cys132.

The protein belongs to the complex I 20 kDa subunit family. NDH-1 is composed of 14 different subunits. Subunits NuoB, C, D, E, F, and G constitute the peripheral sector of the complex. It depends on [4Fe-4S] cluster as a cofactor.

Its subcellular location is the cell inner membrane. It catalyses the reaction a quinone + NADH + 5 H(+)(in) = a quinol + NAD(+) + 4 H(+)(out). Functionally, NDH-1 shuttles electrons from NADH, via FMN and iron-sulfur (Fe-S) centers, to quinones in the respiratory chain. Couples the redox reaction to proton translocation (for every two electrons transferred, four hydrogen ions are translocated across the cytoplasmic membrane), and thus conserves the redox energy in a proton gradient. This is NADH-quinone oxidoreductase subunit B from Dechloromonas aromatica (strain RCB).